The primary structure comprises 416 residues: Phosphoglycerate kinase (416 aa).

14 residues coordinate (2R)-3-phosphoglycerate: Val23, Asp24, Phe25, Asn26, Gln38, Arg39, Ser62, His63, Gly65, Arg66, Leu121, Arg122, His168, and Arg169. Gly212 contacts ADP. CDP is bound at residue Gly212. Positions 213 and 214 each coordinate AMP. Ala213 is an ATP binding site. Residue Ala213 coordinates Mg(2+). CDP is bound at residue Asp217. Asp217 serves as a coordination point for Mg(2+). Lys218 provides a ligand contact to AMP. Lys218 is an ATP binding site. Gly236 serves as a coordination point for ADP. Gly236 is a CDP binding site. Positions 237 and 311 each coordinate AMP. ATP-binding residues include Gly237 and Gly311. Positions 336 and 341 each coordinate CDP. ADP is bound at residue Phe341. AMP is bound at residue Glu342. The ATP site is built by Glu342, Asp373, and Thr374. Asp373 contributes to the Mg(2+) binding site.

It belongs to the phosphoglycerate kinase family. As to quaternary structure, monomer. The cofactor is Mg(2+).

It is found in the cytoplasm. It localises to the mitochondrion. It carries out the reaction (2R)-3-phosphoglycerate + ATP = (2R)-3-phospho-glyceroyl phosphate + ADP. Its pathway is carbohydrate degradation; glycolysis; pyruvate from D-glyceraldehyde 3-phosphate: step 2/5. Its function is as follows. Catalyzes one of the two ATP producing reactions in the glycolytic pathway via the reversible conversion of 1,3-diphosphoglycerate to 3-phosphoglycerate. Both L- and D- forms of purine and pyrimidine nucleotides can be used as substrates, but the activity is much lower on pyrimidines. Negatively regulates the biosynthesis of acetyl-CoA from pyruvate in the mitochondrion. The polypeptide is Phosphoglycerate kinase (PGK1) (Debaryomyces hansenii (strain ATCC 36239 / CBS 767 / BCRC 21394 / JCM 1990 / NBRC 0083 / IGC 2968) (Yeast)).